Here is a 407-residue protein sequence, read N- to C-terminus: Multifunctional CCA protein (407 aa).

Residues Gly-8 and Arg-11 each contribute to the ATP site. CTP-binding residues include Gly-8 and Arg-11. 2 residues coordinate Mg(2+): Asp-21 and Asp-23. 3 residues coordinate ATP: Arg-91, Arg-137, and Arg-140. Residues Arg-91, Arg-137, and Arg-140 each contribute to the CTP site. In terms of domain architecture, HD spans 226-327; it reads TGIHVMAVVD…VKLLERTDAL (102 aa).

This sequence belongs to the tRNA nucleotidyltransferase/poly(A) polymerase family. Bacterial CCA-adding enzyme type 1 subfamily. In terms of assembly, monomer. Can also form homodimers and oligomers. Mg(2+) is required as a cofactor. The cofactor is Ni(2+).

The enzyme catalyses a tRNA precursor + 2 CTP + ATP = a tRNA with a 3' CCA end + 3 diphosphate. It carries out the reaction a tRNA with a 3' CCA end + 2 CTP + ATP = a tRNA with a 3' CCACCA end + 3 diphosphate. In terms of biological role, catalyzes the addition and repair of the essential 3'-terminal CCA sequence in tRNAs without using a nucleic acid template. Adds these three nucleotides in the order of C, C, and A to the tRNA nucleotide-73, using CTP and ATP as substrates and producing inorganic pyrophosphate. tRNA 3'-terminal CCA addition is required both for tRNA processing and repair. Also involved in tRNA surveillance by mediating tandem CCA addition to generate a CCACCA at the 3' terminus of unstable tRNAs. While stable tRNAs receive only 3'-terminal CCA, unstable tRNAs are marked with CCACCA and rapidly degraded. This Aromatoleum aromaticum (strain DSM 19018 / LMG 30748 / EbN1) (Azoarcus sp. (strain EbN1)) protein is Multifunctional CCA protein.